The following is a 99-amino-acid chain: Large ribosomal subunit protein uL23 (99 aa).

It belongs to the universal ribosomal protein uL23 family. As to quaternary structure, part of the 50S ribosomal subunit. Contacts protein L29, and trigger factor when it is bound to the ribosome.

One of the early assembly proteins it binds 23S rRNA. One of the proteins that surrounds the polypeptide exit tunnel on the outside of the ribosome. Forms the main docking site for trigger factor binding to the ribosome. This Pseudomonas fluorescens (strain SBW25) protein is Large ribosomal subunit protein uL23.